The chain runs to 382 residues: uncharacterized protein (382 aa).

This is an uncharacterized protein from Methanocaldococcus jannaschii (strain ATCC 43067 / DSM 2661 / JAL-1 / JCM 10045 / NBRC 100440) (Methanococcus jannaschii).